We begin with the raw amino-acid sequence, 385 residues long: 1-deoxy-D-xylulose 5-phosphate reductoisomerase 1 (385 aa).

Residues T11, G12, S13, I14, N39, and N122 each contribute to the NADPH site. K123 lines the 1-deoxy-D-xylulose 5-phosphate pocket. Residue E124 coordinates NADPH. D148 provides a ligand contact to Mn(2+). S149, E150, S174, and H197 together coordinate 1-deoxy-D-xylulose 5-phosphate. E150 contacts Mn(2+). G203 serves as a coordination point for NADPH. The 1-deoxy-D-xylulose 5-phosphate site is built by S210, N215, K216, and E219. E219 is a binding site for Mn(2+).

This sequence belongs to the DXR family. The cofactor is Mg(2+). It depends on Mn(2+) as a cofactor.

The enzyme catalyses 2-C-methyl-D-erythritol 4-phosphate + NADP(+) = 1-deoxy-D-xylulose 5-phosphate + NADPH + H(+). It functions in the pathway isoprenoid biosynthesis; isopentenyl diphosphate biosynthesis via DXP pathway; isopentenyl diphosphate from 1-deoxy-D-xylulose 5-phosphate: step 1/6. Its function is as follows. Catalyzes the NADPH-dependent rearrangement and reduction of 1-deoxy-D-xylulose-5-phosphate (DXP) to 2-C-methyl-D-erythritol 4-phosphate (MEP). The sequence is that of 1-deoxy-D-xylulose 5-phosphate reductoisomerase 1 from Bacillus anthracis.